The primary structure comprises 488 residues: Dipeptide and tripeptide permease A (488 aa).

Over 1-35 (MSTANTPEDEQKPSLNAFKQPRAFYLIFSIELWER) the chain is Cytoplasmic. The helical transmembrane segment at 36 to 56 (FGYYGLQGIMAVYLVKMLGMS) threads the bilayer. The Periplasmic portion of the chain corresponds to 57–60 (EAEA). The chain crosses the membrane as a helical span at residues 61 to 81 (ITVFAAFTALVYGFVAIGGWL). At 82–90 (GDKILGTKR) the chain is on the cytoplasmic side. A helical membrane pass occupies residues 91 to 111 (VIVLGAIVLAIGYAMVAFSDH). At 112–114 (DKD) the chain is on the periplasmic side. A helical membrane pass occupies residues 115–135 (MIYWGLATIAVGNGLFKANPS). Residues 136-154 (SLLATCYEKDDPQLDGAFT) lie on the Cytoplasmic side of the membrane. The chain crosses the membrane as a helical span at residues 155-175 (MYYMSINVGSFLSMLATPWLA). Topologically, residues 176 to 179 (ANYG) are periplasmic. Residues 180-200 (WDVAFALSVVGMLITLANFML) form a helical membrane-spanning segment. The Cytoplasmic portion of the chain corresponds to 201–219 (CRGWIKDKGSRPDFEPLNY). Residues 220–240 (LKLLLTLVGIVALTAVSTWLL) form a helical membrane-spanning segment. Residue H241 is a topological domain, periplasmic. A helical membrane pass occupies residues 242–262 (NNEVATWSLAIISLGIILIFA). The Cytoplasmic segment spans residues 263–275 (RETFMMKGVARRK). A helical transmembrane segment spans residues 276–296 (MIVAFLLMVEAVVFFVLYDQM). The Periplasmic portion of the chain corresponds to 297 to 324 (PTSLNFFAIHNVEHAILGFSVEPEQFQS). The chain crosses the membrane as a helical span at residues 325–345 (LNPFWIMLASPLLAAIYNFMG). At 346–353 (DKLPMPYK) the chain is on the cytoplasmic side. Residues 354 to 374 (FTVGMFLSATAFLVLPLGASM) form a helical membrane-spanning segment. The Periplasmic portion of the chain corresponds to 375-391 (ANEAGIVSSWWLVASYG). Residues 392–412 (FQSIGELMISGLGLAMVAQLV) form a helical membrane-spanning segment. At 413–415 (PQR) the chain is on the cytoplasmic side. The helical transmembrane segment at 416 to 436 (LMGFIMGAWFLTSAAAAIIAG) threads the bilayer. Residues 437–460 (KVASLMAVPEDVQNAHASLEIYSS) lie on the Periplasmic side of the membrane. A helical transmembrane segment spans residues 461–481 (VFLQIGIVTGVIALLMLFTAP). Over 482–488 (MLSKMTQ) the chain is Cytoplasmic.

The protein belongs to the major facilitator superfamily. Proton-dependent oligopeptide transporter (POT/PTR) (TC 2.A.17) family. DtpA subfamily.

The protein localises to the cell inner membrane. In terms of biological role, proton-dependent permease that transports di- and tripeptides. This Proteus mirabilis (strain HI4320) protein is Dipeptide and tripeptide permease A.